Consider the following 286-residue polypeptide: Bark leucoagglutinin (286 aa).

Positions 1-28 are cleaved as a signal peptide; that stretch reads ATSNSKPTQVLLATFLTFFFLLLNNVNS. Y73 serves as a coordination point for N-acetyl-alpha-neuraminyl-(2-&gt;3)-beta-D-galactosyl-(1-&gt;4)-beta-D-glucose. Residue N89 is glycosylated (N-linked (GlcNAc...) asparagine). Residues D115 and K135 each coordinate N-acetyl-alpha-neuraminyl-(2-&gt;3)-beta-D-galactosyl-(1-&gt;4)-beta-D-glucose. An N-linked (GlcNAc...) asparagine glycan is attached at N141. E155 and D157 together coordinate Mn(2+). Residues D157, Y159, D165, and D168 each contribute to the Ca(2+) site. Positions 159 and 165 each coordinate N-acetyl-alpha-neuraminyl-(2-&gt;3)-beta-D-galactosyl-(1-&gt;4)-beta-D-glucose. Mn(2+) contacts are provided by D168 and H173. N207 and N219 each carry an N-linked (GlcNAc...) asparagine glycan. A propeptide spans 278–286 (removed in mature form); that stretch reads NVHIARYTA.

This sequence belongs to the leguminous lectin family.

Sialic acid-binding lectin specifically recognizing the trisaccharide sequence Neu5Ac/Gc-alpha-2,3-Gal-beta-1,4-GlcNAc/Glc. The protein is Bark leucoagglutinin of Maackia amurensis (Amur maackia).